A 427-amino-acid chain; its full sequence is Stemphyloxin II biosynthesis cluster transcription factor sthR (427 aa).

The zn(2)-C6 fungal-type DNA-binding region spans 15-45; the sequence is CDRCRKQKLRCPPDKDDMGTCGRCLRAGVAC. A disordered region spans residues 51–70; sequence KPRGRSQKHGISTDGTSHVS. The span at 59-69 shows a compositional bias: polar residues; it reads HGISTDGTSHV.

Its subcellular location is the nucleus. In terms of biological role, transcription factor that regulates the expression of the gene cluster that mediates the biosynthesis of the phytotoxin stemphyloxin II. The sequence is that of Stemphyloxin II biosynthesis cluster transcription factor sthR from Phaeosphaeria nodorum (strain SN15 / ATCC MYA-4574 / FGSC 10173) (Glume blotch fungus).